Here is a 228-residue protein sequence, read N- to C-terminus: Probable 26S proteasome regulatory subunit p28 (228 aa).

ANK repeat units lie at residues 1 to 30 (MSNY…SLLL), 35 to 64 (DGRI…NVNL), 71 to 100 (SGWT…KPDL), 106 to 135 (QGVT…SVRI), 139 to 168 (FNQI…SAVN), and 173 to 203 (QGWT…EYDL).

In terms of assembly, interacts with RPT3.

Acts as a chaperone during the assembly of the 26S proteasome, specifically of the 19S regulatory complex (RC) and appears to have an overlapping role with RPN14. This chain is Probable 26S proteasome regulatory subunit p28 (NAS6), found in Saccharomyces cerevisiae (strain ATCC 204508 / S288c) (Baker's yeast).